A 727-amino-acid polypeptide reads, in one-letter code: ATP-dependent zinc metalloprotease FtsH (727 aa).

Residues 1-6 lie on the Cytoplasmic side of the membrane; it reads MQKAFR. A helical transmembrane segment spans residues 7-27; the sequence is NVLVIAIIGVIIFGVFSYING. Residues 28-110 are Extracellular-facing; sequence NGNTPKQLSY…KVKEEEKQSV (83 aa). Residues 111–131 form a helical membrane-spanning segment; that stretch reads FVSMLTTLIPVLIIAFLFIFF. The Cytoplasmic portion of the chain corresponds to 132-727; the sequence is LSQAQGGGGG…PNDPNNPSNR (596 aa). ATP is bound at residue 205–212; sequence GPPGTGKT. His-427 is a Zn(2+) binding site. Glu-428 is a catalytic residue. Zn(2+)-binding residues include His-431 and Asp-503. 2 stretches are compositionally biased toward basic and acidic residues: residues 645 to 684 and 691 to 706; these read LEEGKEDMREDRKEDNDMNRERRHRQRDDRDNQTGHDQLR and NDQHRGHSNNEEDTGH. The tract at residues 645–727 is disordered; it reads LEEGKEDMRE…PNDPNNPSNR (83 aa). Residues 710–727 show a composition bias toward low complexity; it reads PNIDKPYNPNDPNNPSNR.

It in the central section; belongs to the AAA ATPase family. In the C-terminal section; belongs to the peptidase M41 family. As to quaternary structure, homohexamer. Zn(2+) is required as a cofactor.

The protein localises to the cell membrane. Acts as a processive, ATP-dependent zinc metallopeptidase for both cytoplasmic and membrane proteins. Plays a role in the quality control of integral membrane proteins. The protein is ATP-dependent zinc metalloprotease FtsH of Staphylococcus haemolyticus (strain JCSC1435).